The chain runs to 29 residues: Cyclotide vibi-B (29 aa).

Positions 1-29 (GLPVCGETCFGGTCNTPGCTCSYPICTRN) form a cross-link, cyclopeptide (Gly-Asn). Disulfide bonds link Cys-5–Cys-19, Cys-9–Cys-21, and Cys-14–Cys-26.

In terms of processing, this is a cyclic peptide.

In terms of biological role, probably participates in a plant defense mechanism. The chain is Cyclotide vibi-B from Viola biflora (Yellow wood violet).